The chain runs to 385 residues: 3-hydroxyisobutyryl-CoA hydrolase, mitochondrial (385 aa).

4 residues coordinate substrate: glutamate 120, glycine 145, glutamate 168, and aspartate 176.

This sequence belongs to the enoyl-CoA hydratase/isomerase family.

It is found in the mitochondrion. It carries out the reaction 3-hydroxy-2-methylpropanoyl-CoA + H2O = 3-hydroxy-2-methylpropanoate + CoA + H(+). The protein operates within amino-acid degradation; L-valine degradation. Hydrolyzes 3-hydroxyisobutyryl-CoA (HIBYL-CoA), a saline catabolite. Has high activity toward isobutyryl-CoA. Could be an isobutyryl-CoA dehydrogenase that functions in valine catabolism. Also hydrolyzes 3-hydroxypropanoyl-CoA. This chain is 3-hydroxyisobutyryl-CoA hydrolase, mitochondrial (hibch), found in Xenopus laevis (African clawed frog).